Consider the following 232-residue polypeptide: Ribonuclease 3 (232 aa).

Residues 5-134 enclose the RNase III domain; the sequence is ENLLFDRFGL…FLGALLLDKG (130 aa). Position 47 (Glu47) interacts with Mg(2+). Asp51 is an active-site residue. The Mg(2+) site is built by Asp120 and Glu123. The active site involves Glu123. Positions 160-229 constitute a DRBM domain; the sequence is DYKTKLQELL…AKNAFEKENH (70 aa).

It belongs to the ribonuclease III family. Homodimer. It depends on Mg(2+) as a cofactor.

It is found in the cytoplasm. The enzyme catalyses Endonucleolytic cleavage to 5'-phosphomonoester.. Its function is as follows. Digests double-stranded RNA. Involved in the processing of primary rRNA transcript to yield the immediate precursors to the large and small rRNAs (23S and 16S). Processes some mRNAs, and tRNAs when they are encoded in the rRNA operon. Processes pre-crRNA and tracrRNA of type II CRISPR loci if present in the organism. This is Ribonuclease 3 from Streptococcus gordonii (strain Challis / ATCC 35105 / BCRC 15272 / CH1 / DL1 / V288).